A 278-amino-acid polypeptide reads, in one-letter code: Shikimate dehydrogenase (NADP(+)) (278 aa).

Shikimate-binding positions include 19-21 (SRS) and T66. K70 serves as the catalytic Proton acceptor. D82 contributes to the NADP(+) binding site. The shikimate site is built by N91 and D107. NADP(+) is bound by residues 133–137 (GAGGA), 157–162 (NRTRAK), and I222. Y224 contributes to the shikimate binding site. G245 is an NADP(+) binding site.

It belongs to the shikimate dehydrogenase family. As to quaternary structure, homodimer.

The catalysed reaction is shikimate + NADP(+) = 3-dehydroshikimate + NADPH + H(+). It participates in metabolic intermediate biosynthesis; chorismate biosynthesis; chorismate from D-erythrose 4-phosphate and phosphoenolpyruvate: step 4/7. Involved in the biosynthesis of the chorismate, which leads to the biosynthesis of aromatic amino acids. Catalyzes the reversible NADPH linked reduction of 3-dehydroshikimate (DHSA) to yield shikimate (SA). In Dinoroseobacter shibae (strain DSM 16493 / NCIMB 14021 / DFL 12), this protein is Shikimate dehydrogenase (NADP(+)).